The chain runs to 288 residues: 4-hydroxybenzoate octaprenyltransferase (288 aa).

Helical transmembrane passes span 23–43 (IGSL…GRGI), 46–66 (AKIL…GCVV), 98–118 (ILFV…NSMT), 141–161 (LPQV…FAAV), 163–183 (ESLP…TVAY), 213–233 (LIIG…GWLM), 234–254 (NLGG…THQQ), and 268–288 (AFLN…ISYW).

Belongs to the UbiA prenyltransferase family. Mg(2+) serves as cofactor.

It is found in the cell inner membrane. It catalyses the reaction all-trans-octaprenyl diphosphate + 4-hydroxybenzoate = 4-hydroxy-3-(all-trans-octaprenyl)benzoate + diphosphate. The protein operates within cofactor biosynthesis; ubiquinone biosynthesis. Functionally, catalyzes the prenylation of para-hydroxybenzoate (PHB) with an all-trans polyprenyl group. Mediates the second step in the final reaction sequence of ubiquinone-8 (UQ-8) biosynthesis, which is the condensation of the polyisoprenoid side chain with PHB, generating the first membrane-bound Q intermediate 3-octaprenyl-4-hydroxybenzoate. The chain is 4-hydroxybenzoate octaprenyltransferase from Yersinia pseudotuberculosis serotype IB (strain PB1/+).